The following is a 209-amino-acid chain: Uracil phosphoribosyltransferase (209 aa).

5-phospho-alpha-D-ribose 1-diphosphate is bound by residues Arg-79, Arg-104, and 131–139 (DPMLATGGS). Residues Ile-194 and 199-201 (GDA) contribute to the uracil site. A 5-phospho-alpha-D-ribose 1-diphosphate-binding site is contributed by Asp-200.

This sequence belongs to the UPRTase family. Requires Mg(2+) as cofactor.

The catalysed reaction is UMP + diphosphate = 5-phospho-alpha-D-ribose 1-diphosphate + uracil. The protein operates within pyrimidine metabolism; UMP biosynthesis via salvage pathway; UMP from uracil: step 1/1. With respect to regulation, allosterically activated by GTP. Catalyzes the conversion of uracil and 5-phospho-alpha-D-ribose 1-diphosphate (PRPP) to UMP and diphosphate. The sequence is that of Uracil phosphoribosyltransferase from Pediococcus pentosaceus (strain ATCC 25745 / CCUG 21536 / LMG 10740 / 183-1w).